A 380-amino-acid chain; its full sequence is Probable protein phosphatase 2C 34 (380 aa).

The region spanning 32-335 (AAGEFSMAAA…DDISVIVVYL (304 aa)) is the PPM-type phosphatase domain. Mn(2+)-binding residues include D66, G67, D267, and D326.

This sequence belongs to the PP2C family. The cofactor is Mg(2+). Mn(2+) is required as a cofactor.

The catalysed reaction is O-phospho-L-seryl-[protein] + H2O = L-seryl-[protein] + phosphate. It carries out the reaction O-phospho-L-threonyl-[protein] + H2O = L-threonyl-[protein] + phosphate. The chain is Probable protein phosphatase 2C 34 (BIPP2C2) from Oryza sativa subsp. indica (Rice).